Consider the following 567-residue polypeptide: Urease subunit alpha (567 aa).

The Urease domain maps to 129–567 (GGIDAHIHFI…LPLAQLYCLF (439 aa)). Ni(2+)-binding residues include H134, H136, and K217. K217 is modified (N6-carboxylysine). H219 is a binding site for substrate. Ni(2+) is bound by residues H246 and H272. H320 serves as the catalytic Proton donor. D360 serves as a coordination point for Ni(2+).

Belongs to the metallo-dependent hydrolases superfamily. Urease alpha subunit family. As to quaternary structure, heterotrimer of UreA (gamma), UreB (beta) and UreC (alpha) subunits. Three heterotrimers associate to form the active enzyme. Ni cation is required as a cofactor. In terms of processing, carboxylation allows a single lysine to coordinate two nickel ions.

It is found in the cytoplasm. The enzyme catalyses urea + 2 H2O + H(+) = hydrogencarbonate + 2 NH4(+). The protein operates within nitrogen metabolism; urea degradation; CO(2) and NH(3) from urea (urease route): step 1/1. This is Urease subunit alpha from Alteromonas mediterranea (strain DSM 17117 / CIP 110805 / LMG 28347 / Deep ecotype).